The primary structure comprises 147 residues: Globin (147 aa).

The Globin domain occupies 1–147 (GLDGAQKTAL…LLTMLIKAHV (147 aa)). Heme b-binding residues include His66 and His98.

The protein belongs to the globin family. Homodimer.

The protein localises to the cytoplasm. This chain is Globin, found in Busycotypus canaliculatus (Channeled whelk).